The following is a 302-amino-acid chain: Cobalt-precorrin-6A reductase (302 aa).

Basic and acidic residues predominate over residues 1–10 (MQTPEIKEGT). The interval 1–37 (MQTPEIKEGTEQYLWRRKTMNPGDKGVKRKGSDRQRE) is disordered.

This sequence belongs to the precorrin-6x reductase family.

It carries out the reaction Co-precorrin-6B + NAD(+) = Co-precorrin-6A + NADH + H(+). It participates in cofactor biosynthesis; adenosylcobalamin biosynthesis; cob(II)yrinate a,c-diamide from sirohydrochlorin (anaerobic route): step 7/10. Catalyzes the reduction of the macrocycle of cobalt-precorrin-6A to cobalt-precorrin-6B. The sequence is that of Cobalt-precorrin-6A reductase (cbiJ) from Methanothermobacter thermautotrophicus (strain ATCC 29096 / DSM 1053 / JCM 10044 / NBRC 100330 / Delta H) (Methanobacterium thermoautotrophicum).